The following is a 407-amino-acid chain: Argininosuccinate synthase (407 aa).

ATP contacts are provided by residues Ala-10–Ser-18 and Ala-37. Residues Tyr-88 and Ser-93 each contribute to the L-citrulline site. Residue Gly-118 participates in ATP binding. Residues Thr-120, Asn-124, and Asp-125 each coordinate L-aspartate. Asn-124 is a binding site for L-citrulline. 5 residues coordinate L-citrulline: Arg-128, Ser-180, Ser-189, Glu-265, and Tyr-277.

The protein belongs to the argininosuccinate synthase family. Type 1 subfamily. In terms of assembly, homotetramer.

The protein localises to the cytoplasm. The enzyme catalyses L-citrulline + L-aspartate + ATP = 2-(N(omega)-L-arginino)succinate + AMP + diphosphate + H(+). The protein operates within amino-acid biosynthesis; L-arginine biosynthesis; L-arginine from L-ornithine and carbamoyl phosphate: step 2/3. This Alcanivorax borkumensis (strain ATCC 700651 / DSM 11573 / NCIMB 13689 / SK2) protein is Argininosuccinate synthase.